A 450-amino-acid chain; its full sequence is tRNA modification GTPase MnmE (450 aa).

(6S)-5-formyl-5,6,7,8-tetrahydrofolate is bound by residues arginine 25, glutamate 83, and lysine 122. One can recognise a TrmE-type G domain in the interval 218 to 377 (GFKVAIIGKP…QMEALLDSIG (160 aa)). A K(+)-binding site is contributed by asparagine 228. GTP-binding positions include 228 to 233 (NVGKSS), 247 to 253 (SDIAGTT), and 272 to 275 (DTAG). Residue serine 232 coordinates Mg(2+). The K(+) site is built by serine 247, isoleucine 249, and threonine 252. Threonine 253 contacts Mg(2+). Lysine 450 is a (6S)-5-formyl-5,6,7,8-tetrahydrofolate binding site.

Belongs to the TRAFAC class TrmE-Era-EngA-EngB-Septin-like GTPase superfamily. TrmE GTPase family. As to quaternary structure, homodimer. Heterotetramer of two MnmE and two MnmG subunits. K(+) serves as cofactor.

The protein localises to the cytoplasm. In terms of biological role, exhibits a very high intrinsic GTPase hydrolysis rate. Involved in the addition of a carboxymethylaminomethyl (cmnm) group at the wobble position (U34) of certain tRNAs, forming tRNA-cmnm(5)s(2)U34. The polypeptide is tRNA modification GTPase MnmE (Sulfurovum sp. (strain NBC37-1)).